A 65-amino-acid polypeptide reads, in one-letter code: Beta-mammal toxin Tpa2 (65 aa).

In terms of domain architecture, LCN-type CS-alpha/beta spans 2 to 64; it reads KEGYLVGNDG…TWSRATNRCG (63 aa). Disulfide bonds link C12/C63, C16/C38, C24/C44, and C28/C46.

As to expression, expressed by the venom gland.

It is found in the secreted. Its function is as follows. Beta toxins bind voltage-independently at site-4 of sodium channels (Nav) and shift the voltage of activation toward more negative potentials thereby affecting sodium channel activation and promoting spontaneous and repetitive firing. This toxin is lethal to mice. The chain is Beta-mammal toxin Tpa2 from Tityus pachyurus (Colombian scorpion).